Consider the following 161-residue polypeptide: Ribonuclease H (161 aa).

The RNase H type-1 domain maps to 3–144 (VLKQLSIFTD…CDTLARVAAE (142 aa)). The Mg(2+) site is built by D12, E50, D72, and D136.

Belongs to the RNase H family. Monomer. Requires Mg(2+) as cofactor.

It localises to the cytoplasm. It carries out the reaction Endonucleolytic cleavage to 5'-phosphomonoester.. Its function is as follows. Endonuclease that specifically degrades the RNA of RNA-DNA hybrids. The protein is Ribonuclease H of Shewanella woodyi (strain ATCC 51908 / MS32).